A 261-amino-acid polypeptide reads, in one-letter code: MRVALGIEYDGSSYCGWQRQVEVDSVQAQLEKALSLIANEPIEVVCAGRTDAGVHGTGQVVHFDTTVIRPDSAWTLGVNANLPDTIAVRWVKLVDDSFHARFSATARRYRYVIYNHKFRPGLLRHGLSHYHGDIDETLMHQAAQQLLGEHDFTSFRAMQCQSKSPFRSVHEVNVTRQGMYIMVDIKANAFLHHMVRNIVGSLLEIGLGNQPLNWISKLIAVKDRRQAAATAKPNGLYLVDVTYPEEFAIPKLALGPLFMLD.

Catalysis depends on Asp-51, which acts as the Nucleophile. Residue Tyr-109 coordinates substrate.

This sequence belongs to the tRNA pseudouridine synthase TruA family. In terms of assembly, homodimer.

The catalysed reaction is uridine(38/39/40) in tRNA = pseudouridine(38/39/40) in tRNA. Formation of pseudouridine at positions 38, 39 and 40 in the anticodon stem and loop of transfer RNAs. In Shewanella denitrificans (strain OS217 / ATCC BAA-1090 / DSM 15013), this protein is tRNA pseudouridine synthase A.